The chain runs to 199 residues: Imidazole glycerol phosphate synthase subunit HisH 2 (199 aa).

The 199-residue stretch at 1 to 199 folds into the Glutamine amidotransferase type-1 domain; the sequence is MIAVIDVSGN…NNFLSLESKC (199 aa). Catalysis depends on Cys76, which acts as the Nucleophile. Active-site residues include His177 and Glu179.

In terms of assembly, heterodimer of HisH and HisF.

The protein localises to the cytoplasm. The catalysed reaction is 5-[(5-phospho-1-deoxy-D-ribulos-1-ylimino)methylamino]-1-(5-phospho-beta-D-ribosyl)imidazole-4-carboxamide + L-glutamine = D-erythro-1-(imidazol-4-yl)glycerol 3-phosphate + 5-amino-1-(5-phospho-beta-D-ribosyl)imidazole-4-carboxamide + L-glutamate + H(+). The enzyme catalyses L-glutamine + H2O = L-glutamate + NH4(+). It participates in amino-acid biosynthesis; L-histidine biosynthesis; L-histidine from 5-phospho-alpha-D-ribose 1-diphosphate: step 5/9. IGPS catalyzes the conversion of PRFAR and glutamine to IGP, AICAR and glutamate. The HisH subunit provides the glutamine amidotransferase activity that produces the ammonia necessary to HisF for the synthesis of IGP and AICAR. The polypeptide is Imidazole glycerol phosphate synthase subunit HisH 2 (Legionella pneumophila (strain Lens)).